We begin with the raw amino-acid sequence, 284 residues long: Shikimate dehydrogenase (NADP(+)) (284 aa).

Shikimate-binding positions include 19–21 and Thr66; that span reads SFS. The active-site Proton acceptor is the Lys70. Asp82 serves as a coordination point for NADP(+). Residues Asn91 and Asp106 each contribute to the shikimate site. Residues 130 to 134 and Ile226 contribute to the NADP(+) site; that span reads GSGGS. Position 228 (Tyr228) interacts with shikimate. Position 249 (Gly249) interacts with NADP(+).

This sequence belongs to the shikimate dehydrogenase family. In terms of assembly, homodimer.

The enzyme catalyses shikimate + NADP(+) = 3-dehydroshikimate + NADPH + H(+). The protein operates within metabolic intermediate biosynthesis; chorismate biosynthesis; chorismate from D-erythrose 4-phosphate and phosphoenolpyruvate: step 4/7. Involved in the biosynthesis of the chorismate, which leads to the biosynthesis of aromatic amino acids. Catalyzes the reversible NADPH linked reduction of 3-dehydroshikimate (DHSA) to yield shikimate (SA). The polypeptide is Shikimate dehydrogenase (NADP(+)) (Methanococcus vannielii (strain ATCC 35089 / DSM 1224 / JCM 13029 / OCM 148 / SB)).